A 232-amino-acid chain; its full sequence is Ion-translocating oxidoreductase complex subunit E (232 aa).

6 helical membrane passes run 18–38, 39–59, 69–89, 93–113, 127–147, and 182–202; these read GLVQ…ITNA, LGLG…VSLV, IPVF…LINA, GLYL…IIIG, AAFD…VLGA, and PFLL…LIAL.

It belongs to the NqrDE/RnfAE family. In terms of assembly, the complex is composed of six subunits: RnfA, RnfB, RnfC, RnfD, RnfE and RnfG.

The protein localises to the cell inner membrane. Its function is as follows. Part of a membrane-bound complex that couples electron transfer with translocation of ions across the membrane. This is Ion-translocating oxidoreductase complex subunit E from Shewanella baltica (strain OS185).